Here is a 49-residue protein sequence, read N- to C-terminus: Metallothionein (49 aa).

The segment at 1 to 16 (SCAGSCKCKNCRCRSC) is beta. A divalent metal cation-binding residues include Cys2, Cys6, Cys8, Cys11, Cys13, Cys16, Cys20, Cys21, Cys23, Cys24, Cys28, Cys31, Cys35, Cys37, Cys45, Cys47, and Cys48. The alpha stretch occupies residues 17-49 (RKSCCSCCPAGCNNCAKGCVCKEPASSKCSCCH).

This sequence belongs to the metallothionein superfamily. Type 1 family.

Metallothioneins have a high content of cysteine residues that bind various heavy metals. This Phasianus colchicus colchicus (Black-necked pheasant) protein is Metallothionein.